The primary structure comprises 242 residues: Probable transcriptional regulatory protein Bmul_0984/BMULJ_02280 (242 aa).

The protein belongs to the TACO1 family.

Its subcellular location is the cytoplasm. The chain is Probable transcriptional regulatory protein Bmul_0984/BMULJ_02280 from Burkholderia multivorans (strain ATCC 17616 / 249).